The primary structure comprises 120 residues: Non-specific lipid-transfer protein 2 (120 aa).

The N-terminal stretch at 1-25 is a signal peptide; that stretch reads MATSMKLACVALVMCMVVIAPMAEA. 4 disulfides stabilise this stretch: cysteine 29–cysteine 78, cysteine 39–cysteine 55, cysteine 56–cysteine 101, and cysteine 76–cysteine 115.

It belongs to the plant LTP family. In terms of tissue distribution, expressed in roots, stem, leaves and tendrils of the mature plant.

Its function is as follows. Plant non-specific lipid-transfer proteins transfer phospholipids as well as galactolipids across membranes. May play a role in wax or cutin deposition in the cell walls of expanding epidermal cells and certain secretory tissues. The chain is Non-specific lipid-transfer protein 2 from Pisum sativum (Garden pea).